The chain runs to 174 residues: NADH-ubiquinone oxidoreductase chain 6 (174 aa).

Transmembrane regions (helical) follow at residues Met1–Ser21, Ser24–Leu44, Phe46–Val66, Val86–Met106, and Trp151–Thr171.

Belongs to the complex I subunit 6 family. Core subunit of respiratory chain NADH dehydrogenase (Complex I) which is composed of 45 different subunits.

The protein resides in the mitochondrion inner membrane. It carries out the reaction a ubiquinone + NADH + 5 H(+)(in) = a ubiquinol + NAD(+) + 4 H(+)(out). Functionally, core subunit of the mitochondrial membrane respiratory chain NADH dehydrogenase (Complex I) which catalyzes electron transfer from NADH through the respiratory chain, using ubiquinone as an electron acceptor. Essential for the catalytic activity and assembly of complex I. This is NADH-ubiquinone oxidoreductase chain 6 (MT-ND6) from Oryctolagus cuniculus (Rabbit).